The chain runs to 190 residues: Dual-action ribosomal maturation protein DarP (190 aa).

Residues methionine 1 to histidine 31 form a disordered region.

It belongs to the DarP family.

Its subcellular location is the cytoplasm. In terms of biological role, member of a network of 50S ribosomal subunit biogenesis factors which assembles along the 30S-50S interface, preventing incorrect 23S rRNA structures from forming. Promotes peptidyl transferase center (PTC) maturation. The protein is Dual-action ribosomal maturation protein DarP of Aromatoleum aromaticum (strain DSM 19018 / LMG 30748 / EbN1) (Azoarcus sp. (strain EbN1)).